Reading from the N-terminus, the 491-residue chain is La-related protein 6 (491 aa).

The tract at residues Met1–Pro87 is disordered. Ala2 carries the N-acetylalanine modification. Positions Glu24 to Gly37 are enriched in acidic residues. Phosphoserine occurs at positions 56 and 58. Residues Lys86–Pro177 form the HTH La-type RNA-binding domain. Residues Lys184–Pro296 form the RRM domain. A Nuclear export signal motif is present at residues Leu186–Leu193. 2 disordered regions span residues Met293–Arg403 and Ser423–Val491. The Nuclear localization signal motif lies at Pro296–Lys302. The span at Asp332 to Pro346 shows a compositional bias: low complexity. Composition is skewed to polar residues over residues Asn359–Leu386 and Gln444–Leu453. One can recognise an SUZ-C domain in the interval Pro427–Glu485. The span at His482 to Val491 shows a compositional bias: basic and acidic residues.

Interacts (via the HTH domain) with VIM/vimentin. Interacts (via C-terminus) with non-muscle myosin MYH10. Interacts (via C-terminus) with DHX9. Expressed in numerous tissues.

It localises to the cytoplasm. The protein resides in the nucleus. Its function is as follows. Regulates the coordinated translation of type I collagen alpha-1 and alpha-2 mRNAs, CO1A1 and CO1A2. Stabilizes mRNAs through high-affinity binding of a stem-loop structure in their 5' UTR. This regulation requires VIM and MYH10 filaments, and the helicase DHX9. This is La-related protein 6 (LARP6) from Homo sapiens (Human).